A 277-amino-acid polypeptide reads, in one-letter code: 4-hydroxy-3-methylbut-2-enyl diphosphate reductase (277 aa).

Residue cysteine 12 coordinates [4Fe-4S] cluster. (2E)-4-hydroxy-3-methylbut-2-enyl diphosphate is bound by residues histidine 36 and histidine 70. Positions 36 and 70 each coordinate dimethylallyl diphosphate. Residues histidine 36 and histidine 70 each coordinate isopentenyl diphosphate. Cysteine 92 provides a ligand contact to [4Fe-4S] cluster. A (2E)-4-hydroxy-3-methylbut-2-enyl diphosphate-binding site is contributed by histidine 120. Residue histidine 120 coordinates dimethylallyl diphosphate. Histidine 120 is an isopentenyl diphosphate binding site. Glutamate 122 (proton donor) is an active-site residue. Threonine 158 is a (2E)-4-hydroxy-3-methylbut-2-enyl diphosphate binding site. Cysteine 186 lines the [4Fe-4S] cluster pocket. 3 residues coordinate (2E)-4-hydroxy-3-methylbut-2-enyl diphosphate: serine 214, asparagine 216, and serine 258. Dimethylallyl diphosphate-binding residues include serine 214, asparagine 216, and serine 258. Isopentenyl diphosphate is bound by residues serine 214, asparagine 216, and serine 258.

Belongs to the IspH family. [4Fe-4S] cluster is required as a cofactor.

It catalyses the reaction isopentenyl diphosphate + 2 oxidized [2Fe-2S]-[ferredoxin] + H2O = (2E)-4-hydroxy-3-methylbut-2-enyl diphosphate + 2 reduced [2Fe-2S]-[ferredoxin] + 2 H(+). The catalysed reaction is dimethylallyl diphosphate + 2 oxidized [2Fe-2S]-[ferredoxin] + H2O = (2E)-4-hydroxy-3-methylbut-2-enyl diphosphate + 2 reduced [2Fe-2S]-[ferredoxin] + 2 H(+). Its pathway is isoprenoid biosynthesis; dimethylallyl diphosphate biosynthesis; dimethylallyl diphosphate from (2E)-4-hydroxy-3-methylbutenyl diphosphate: step 1/1. The protein operates within isoprenoid biosynthesis; isopentenyl diphosphate biosynthesis via DXP pathway; isopentenyl diphosphate from 1-deoxy-D-xylulose 5-phosphate: step 6/6. Catalyzes the conversion of 1-hydroxy-2-methyl-2-(E)-butenyl 4-diphosphate (HMBPP) into a mixture of isopentenyl diphosphate (IPP) and dimethylallyl diphosphate (DMAPP). Acts in the terminal step of the DOXP/MEP pathway for isoprenoid precursor biosynthesis. The protein is 4-hydroxy-3-methylbut-2-enyl diphosphate reductase of Campylobacter jejuni subsp. jejuni serotype O:23/36 (strain 81-176).